A 461-amino-acid chain; its full sequence is MMANILGAGVYSDIFFVAFKLPNLFRRIFAEGSFSQSFLPSFIRSSIKGSFASLVGLIFCIVLFMWCLLVALNPLWLAKLLAYGFDEETLKLCAPIVAINFWYLLLVFITTFLGALLQYKHSFFASAYSASLLNVCMILALLISKEKTHLEALYYLSYGVLLGGVAQILLHFYPLVKLGLLNLLWKGFLSFKTKNAAKKKYRSKRIKRDLKGFFKQFLPSVLGNSSAQIASFLDTTIASFLASGSVSYLYYANRVFQLPLALFAIAISTALFPSIAIALKNNQQDLILQRLQKAWFFLVGVLLLCSIGGIMLSKEITELLFERGQFSPKDTLITSQVFSLYLLGLLPFGLTKLFSLWLYAKLEQKKAAKISLISLFLGLAASLSLMPLLGVLGLALANSLSGLFLFVLTIKAFGFQLFLGIIKNLKSWLVILFLACVEILLLLAFKSWVTHLYLFYYFQGF.

12 consecutive transmembrane segments (helical) span residues 5–25, 51–71, 96–116, 123–143, 156–176, 229–249, 258–278, 293–313, 337–357, 372–392, 402–422, and 429–449; these read ILGA…PNLF, FASL…LLVA, IVAI…LGAL, FFAS…ALLI, LSYG…YPLV, IASF…VSYL, LPLA…IAIA, KAWF…IMLS, VFSL…FSLW, LISL…LGVL, GLFL…LGII, and LVIL…KSWV.

It belongs to the MurJ/MviN family.

The protein localises to the cell inner membrane. It participates in cell wall biogenesis; peptidoglycan biosynthesis. Its function is as follows. Involved in peptidoglycan biosynthesis. Transports lipid-linked peptidoglycan precursors from the inner to the outer leaflet of the cytoplasmic membrane. The protein is Probable lipid II flippase MurJ of Helicobacter pylori (strain ATCC 700392 / 26695) (Campylobacter pylori).